The primary structure comprises 309 residues: Taste receptor type 2 member 124 (309 aa).

Residues 1-7 (MVPVLHS) are Extracellular-facing. The helical transmembrane segment at 8–28 (LSTIILIAEFVWGNLSNGLIV) threads the bilayer. Topologically, residues 29-46 (LKNCIDWINKKELSTVDQ) are cytoplasmic. Residues 47–67 (ILIVLAISRISLIWETLIIWV) form a helical membrane-spanning segment. The Extracellular portion of the chain corresponds to 68-86 (KDQLISSITIEELKIIVFS). Residues 87–107 (FILSSHFSLWLATALSIFYLF) form a helical membrane-spanning segment. Over 108 to 127 (RIPNCYWQIFLYLKWRIKQL) the chain is Cytoplasmic. Residues 128–148 (IVHMLLGSLVFLVANMIQITI) traverse the membrane as a helical segment. Topologically, residues 149–183 (TLEERFYQYGGNTSVNSMETEFSILIELMLFNMTM) are extracellular. Residues Asn-160 and Asn-180 are each glycosylated (N-linked (GlcNAc...) asparagine). A helical transmembrane segment spans residues 184-204 (FSIIPFSLALISFLLLIFSLW). Residues 205 to 230 (KHLQKMPLNSRGDRDPSATAHRNALR) lie on the Cytoplasmic side of the membrane. A helical transmembrane segment spans residues 231-251 (ILVSFLLLYTIYFLSLLISWV). The Extracellular portion of the chain corresponds to 252–261 (AQKNQSELVH). Residue Asn-255 is glycosylated (N-linked (GlcNAc...) asparagine). A helical transmembrane segment spans residues 262 to 282 (IICMITSLVYPSFHSYILILG). Over 283–309 (NYKLKQTSLWVMRQLGCRMKRQNTPTT) the chain is Cytoplasmic.

The protein belongs to the G-protein coupled receptor T2R family.

Its subcellular location is the membrane. Functionally, putative taste receptor which may play a role in the perception of bitterness. The chain is Taste receptor type 2 member 124 from Mus musculus (Mouse).